The following is a 444-amino-acid chain: Citrate-proton symporter (444 aa).

The Cytoplasmic portion of the chain corresponds to 1–41 (MPTARCSMRASSTAPVRMMATAGGARIGAILRVTSGNFLEQ). A helical transmembrane segment spans residues 42–62 (FDFFLFGFYATYIAHTFFPAS). Residues 63–72 (SEFASLMMTF) are Periplasmic-facing. The helical transmembrane segment at 73–93 (AVFGAGFLMRPIGAIVLGAYI) threads the bilayer. At 94–114 (DKVGRRKGLIVTLSIMATGTF) the chain is on the cytoplasmic side. Residues 115–135 (LIVLIPSYQTIGLWAPLLVLI) traverse the membrane as a helical segment. Over 136–137 (GR) the chain is Periplasmic. Residues 138–158 (LLQGFSAGAELGGVSVYLAEI) traverse the membrane as a helical segment. Over 159 to 177 (ATPGRKGFYTSWQSGSQQV) the chain is Cytoplasmic. The helical transmembrane segment at 178–198 (AIMVAAAMGFALNAVLEPSAI) threads the bilayer. Residue Ser-199 is a topological domain, periplasmic. A helical transmembrane segment spans residues 200-220 (DWGWRIPFLFGVLIVPFIFIL). Over 221 to 251 (RRKLEETQEFTARRHHLAMRQVFATLLANWQ) the chain is Cytoplasmic. Residues 252–272 (VVIAGMMMVAMTTTAFYLITV) form a helical membrane-spanning segment. Residues 273–289 (YAPTFGKKVLMLSASDS) are Periplasmic-facing. A helical membrane pass occupies residues 290–310 (LLVTLLVAISNFFWLPVGGAL). The Cytoplasmic portion of the chain corresponds to 311–318 (SDRFGRRS). The chain crosses the membrane as a helical span at residues 319–339 (VLIAMTLLALATAWPALTMLA). Asn-340 is a topological domain (periplasmic). The chain crosses the membrane as a helical span at residues 341 to 361 (APSFLMMLSVLLWLSFIYGMY). The Cytoplasmic segment spans residues 362–379 (NGAMIPALTEIMPAEVRV). Residues 380-400 (AGFSLAYSLATAVFGGFTPVI) traverse the membrane as a helical segment. The Periplasmic segment spans residues 401–411 (STALIEYTGDK). The chain crosses the membrane as a helical span at residues 412–432 (ASPGYWMSFAAICGLLATCYL). At 433 to 444 (YRRSAVALQTAR) the chain is on the cytoplasmic side.

It belongs to the major facilitator superfamily. Metabolite:H+ Symporter (MHS) family (TC 2.A.1.6) family.

The protein resides in the cell inner membrane. Uptake of citrate across the boundary membrane with the concomitant transport of protons into the cell (symport system). The polypeptide is Citrate-proton symporter (citH) (Klebsiella pneumoniae).